The chain runs to 255 residues: Methionine aminopeptidase (255 aa).

Residue H76 participates in substrate binding. D93, D104, and H167 together coordinate a divalent metal cation. Position 174 (H174) interacts with substrate. Residues E201 and E232 each contribute to the a divalent metal cation site.

It belongs to the peptidase M24A family. Methionine aminopeptidase type 1 subfamily. As to quaternary structure, monomer. Co(2+) is required as a cofactor. It depends on Zn(2+) as a cofactor. Requires Mn(2+) as cofactor. The cofactor is Fe(2+).

It catalyses the reaction Release of N-terminal amino acids, preferentially methionine, from peptides and arylamides.. Removes the N-terminal methionine from nascent proteins. The N-terminal methionine is often cleaved when the second residue in the primary sequence is small and uncharged (Met-Ala-, Cys, Gly, Pro, Ser, Thr, or Val). Requires deformylation of the N(alpha)-formylated initiator methionine before it can be hydrolyzed. The polypeptide is Methionine aminopeptidase (Treponema pallidum (strain Nichols)).